The following is a 279-amino-acid chain: MKLCGFEAGLDKPFFLIAGPCVIESRDMAFETAGALKEICVELGIPFIYKSSYDKANRSSGKSYRGMGMEKGLEILADVKKQLGVPVLTDVHAIDEIPAVAAAVDVLQTPAFLCRQTDFIHAVAASGRPVNIKKGQFLAPGDMKNVVDKAREANGGADTIMVCERGASFGYNNLVSDMRSLAIMRETGCPVVFDATHSVQLPGGQGTASGGQREFVPVLARAAVAVGIAGLFMESHPDPAKALSDGPNAWPLPKMKALLATLKEIDALVKAHGFMEMAG.

It belongs to the KdsA family.

It is found in the cytoplasm. It carries out the reaction D-arabinose 5-phosphate + phosphoenolpyruvate + H2O = 3-deoxy-alpha-D-manno-2-octulosonate-8-phosphate + phosphate. It functions in the pathway carbohydrate biosynthesis; 3-deoxy-D-manno-octulosonate biosynthesis; 3-deoxy-D-manno-octulosonate from D-ribulose 5-phosphate: step 2/3. It participates in bacterial outer membrane biogenesis; lipopolysaccharide biosynthesis. This chain is 2-dehydro-3-deoxyphosphooctonate aldolase, found in Aromatoleum aromaticum (strain DSM 19018 / LMG 30748 / EbN1) (Azoarcus sp. (strain EbN1)).